The primary structure comprises 144 residues: MLQPKKTKFRRQQKGRMKGFAQRGNQLSFGSFGIKSLQSKWITGRQIEAARIAVTRYMQRQGQVWVRIFPDKPITKKGEGVRMGKGKGAPEGFVAPITPGRIIFEVEGVPYEIAKEALRLAAQKLPVTTKFVVRHDYDIQNQNA.

It belongs to the universal ribosomal protein uL16 family. As to quaternary structure, part of the 50S ribosomal subunit.

Functionally, binds 23S rRNA and is also seen to make contacts with the A and possibly P site tRNAs. This is Large ribosomal subunit protein uL16 from Porphyromonas gingivalis (strain ATCC 33277 / DSM 20709 / CIP 103683 / JCM 12257 / NCTC 11834 / 2561).